The chain runs to 210 residues: Large ribosomal subunit protein bL25 (210 aa).

The segment at 190 to 210 (LKSEGAEGGEAEAGQAEEGEE) is disordered. A compositionally biased stretch (acidic residues) spans 196 to 210 (EGGEAEAGQAEEGEE).

It belongs to the bacterial ribosomal protein bL25 family. CTC subfamily. Part of the 50S ribosomal subunit; part of the 5S rRNA/L5/L18/L25 subcomplex. Contacts the 5S rRNA. Binds to the 5S rRNA independently of L5 and L18.

Functionally, this is one of the proteins that binds to the 5S RNA in the ribosome where it forms part of the central protuberance. In Chelativorans sp. (strain BNC1), this protein is Large ribosomal subunit protein bL25.